Consider the following 187-residue polypeptide: Small ribosomal subunit protein uS5 (187 aa).

An S5 DRBM domain is found at 21 to 84 (MVDKLVHINR…ESAKRDMIFV (64 aa)).

It belongs to the universal ribosomal protein uS5 family. In terms of assembly, part of the 30S ribosomal subunit. Contacts proteins S4 and S8.

Functionally, with S4 and S12 plays an important role in translational accuracy. In terms of biological role, located at the back of the 30S subunit body where it stabilizes the conformation of the head with respect to the body. The sequence is that of Small ribosomal subunit protein uS5 from Mesorhizobium japonicum (strain LMG 29417 / CECT 9101 / MAFF 303099) (Mesorhizobium loti (strain MAFF 303099)).